The chain runs to 432 residues: Adenylosuccinate synthetase (432 aa).

GTP contacts are provided by residues 13 to 19 and 41 to 43; these read GDEGKGK and GHT. The Proton acceptor role is filled by Asp14. Residues Asp14 and Gly41 each contribute to the Mg(2+) site. IMP-binding positions include 14 to 17, 39 to 42, Thr130, Arg144, Gln225, Thr240, and Arg304; these read DEGK and NAGH. Residue His42 is the Proton donor of the active site. Residue 300-306 participates in substrate binding; the sequence is ATTGRKR. GTP is bound by residues Arg306, 332-334, and 414-416; these read KLD and STG.

This sequence belongs to the adenylosuccinate synthetase family. As to quaternary structure, homodimer. Mg(2+) is required as a cofactor.

It is found in the cytoplasm. It carries out the reaction IMP + L-aspartate + GTP = N(6)-(1,2-dicarboxyethyl)-AMP + GDP + phosphate + 2 H(+). It functions in the pathway purine metabolism; AMP biosynthesis via de novo pathway; AMP from IMP: step 1/2. Functionally, plays an important role in the de novo pathway of purine nucleotide biosynthesis. Catalyzes the first committed step in the biosynthesis of AMP from IMP. The chain is Adenylosuccinate synthetase from Alkalilimnicola ehrlichii (strain ATCC BAA-1101 / DSM 17681 / MLHE-1).